The primary structure comprises 242 residues: ATP synthase subunit b 2 (242 aa).

A helical transmembrane segment spans residues 4-24 (LLAISSLTLLASLVLLVVSPA). Positions 43–74 (ADSEDGDHDHDHEGDDHGHDEAAGDEHGHGDG) are disordered. The segment covering 49-74 (DHDHDHEGDDHGHDEAAGDEHGHGDG) has biased composition (basic and acidic residues).

This sequence belongs to the ATPase B chain family. As to quaternary structure, F-type ATPases have 2 components, F(1) - the catalytic core - and F(0) - the membrane proton channel. F(1) has five subunits: alpha(3), beta(3), gamma(1), delta(1), epsilon(1). F(0) has three main subunits: a(1), b(2) and c(10-14). The alpha and beta chains form an alternating ring which encloses part of the gamma chain. F(1) is attached to F(0) by a central stalk formed by the gamma and epsilon chains, while a peripheral stalk is formed by the delta and b chains.

It is found in the cell inner membrane. Functionally, f(1)F(0) ATP synthase produces ATP from ADP in the presence of a proton or sodium gradient. F-type ATPases consist of two structural domains, F(1) containing the extramembraneous catalytic core and F(0) containing the membrane proton channel, linked together by a central stalk and a peripheral stalk. During catalysis, ATP synthesis in the catalytic domain of F(1) is coupled via a rotary mechanism of the central stalk subunits to proton translocation. In terms of biological role, component of the F(0) channel, it forms part of the peripheral stalk, linking F(1) to F(0). This chain is ATP synthase subunit b 2, found in Rhodopirellula baltica (strain DSM 10527 / NCIMB 13988 / SH1).